A 317-amino-acid chain; its full sequence is Cyclin-T1-3 (317 aa).

It belongs to the cyclin family. Cyclin T subfamily. As to quaternary structure, interacts with CDKC-1 and CDKC-2. As to expression, abundantly expressed in flowers. Expressed in roots, seedlings, rosettes and stems.

In Arabidopsis thaliana (Mouse-ear cress), this protein is Cyclin-T1-3 (CYCT1-3).